The following is a 160-amino-acid chain: MTKKKAHKPGSATIALNKRARHEYFIEEEFEAGLALQGWEVKSLRAGKANIGDSYVILKDGEAWLFGANFTPMAVASTHVVCDPTRTRKLLLNQRELDSLYGRINREGYTVVALSLYWKNAWCKVKIGVAKGKKQHDKRSDLKEREWQLDKARIMKHAGR.

It belongs to the SmpB family.

The protein localises to the cytoplasm. In terms of biological role, required for rescue of stalled ribosomes mediated by trans-translation. Binds to transfer-messenger RNA (tmRNA), required for stable association of tmRNA with ribosomes. tmRNA and SmpB together mimic tRNA shape, replacing the anticodon stem-loop with SmpB. tmRNA is encoded by the ssrA gene; the 2 termini fold to resemble tRNA(Ala) and it encodes a 'tag peptide', a short internal open reading frame. During trans-translation Ala-aminoacylated tmRNA acts like a tRNA, entering the A-site of stalled ribosomes, displacing the stalled mRNA. The ribosome then switches to translate the ORF on the tmRNA; the nascent peptide is terminated with the 'tag peptide' encoded by the tmRNA and targeted for degradation. The ribosome is freed to recommence translation, which seems to be the essential function of trans-translation. The protein is SsrA-binding protein of Salmonella arizonae (strain ATCC BAA-731 / CDC346-86 / RSK2980).